A 418-amino-acid polypeptide reads, in one-letter code: Deubiquitinase and deneddylase Dub1 (418 aa).

The span at 1-10 (MLSPTNSISK) shows a compositional bias: polar residues. Residues 1–23 (MLSPTNSISKTAPVPPQDSSKPV) form a disordered region. A helical membrane pass occupies residues 40–60 (TALAVLLVVVTLGLILLFYSF). Positions 72 to 144 (TRPSTKEQPT…PLPPKAPKPV (73 aa)) are disordered. Residues 86 to 141 (VPLPSPPLAVPRPSTPPPPVISRPSTPPAPTPAISPPSTPSAPKPSTPPPLPPKAP) show a composition bias toward pro residues. Catalysis depends on residues H288, D305, and C358.

This sequence belongs to the peptidase C48 family.

Its subcellular location is the secreted. It localises to the host cell. The protein resides in the membrane. Functionally, effector proteins function to alter host cell physiology and promote bacterial survival in host tissues. This protease possesses deubiquitinating and deneddylating activities. This is Deubiquitinase and deneddylase Dub1 (cdu1) from Chlamydia trachomatis serovar B (strain TZ1A828/OT).